A 128-amino-acid polypeptide reads, in one-letter code: Small ribosomal subunit protein uS11 (128 aa).

This sequence belongs to the universal ribosomal protein uS11 family. Part of the 30S ribosomal subunit. Interacts with proteins S7 and S18. Binds to IF-3.

Located on the platform of the 30S subunit, it bridges several disparate RNA helices of the 16S rRNA. Forms part of the Shine-Dalgarno cleft in the 70S ribosome. This Porphyromonas gingivalis (strain ATCC BAA-308 / W83) protein is Small ribosomal subunit protein uS11.